We begin with the raw amino-acid sequence, 36 residues long: Potassium channel toxin alpha-KTx 23.1 (36 aa).

4 disulfide bridges follow: cysteine 6-cysteine 26, cysteine 12-cysteine 31, cysteine 16-cysteine 33, and cysteine 21-cysteine 36. Cysteine 36 bears the Cysteine amide mark.

This sequence belongs to the short scorpion toxin superfamily. Potassium channel inhibitor family. Alpha-KTx 23 subfamily. As to expression, expressed by the venom gland.

It localises to the secreted. Functionally, voltage-gated potassium channel inhibitor. Selectively and irreversibly binds (K(d)=2.9 pM) and blocks hKv1.3/KCNA3 potassium channels of human T-lymphocytes. Weakly blocks hKCa3.1/KCNN4, mKv1.1/KCNA1, and hKv1.2/KCNA2 channels. In vivo, high doses (200 ug) produce no symptoms of intoxication when injected into mice. The chain is Potassium channel toxin alpha-KTx 23.1 from Vaejovis mexicanus smithi (Mexican scorpion).